We begin with the raw amino-acid sequence, 921 residues long: Sodium/calcium exchanger 2 (921 aa).

The signal sequence occupies residues 1-20 (MAPLALMGVVLLLGVPHCLG). Residues 23–42 (TPTPSLPPPTANDSDASPEG) are disordered. A helical membrane pass occupies residues 69 to 89 (VARAVVYFVAMVYMFLGVSII). N-linked (GlcNAc...) asparagine glycans are attached at residues Asn125 and Asn130. 4 helical membrane-spanning segments follow: residues 131–151 (LTLMALGSSAPEILLTVIEVC), 165–185 (IVGSAAFNMFVVIAVCVYVIP), 197–217 (VFFVTASWSIFAYVWLYLILA), and 226–246 (VWEALLTLIFFPVCVVFAWMA). Residues 248–267 (KRLLFYKYVYKRYRTDPRSG) are putative calmodulin-binding region. The segment at 371–391 (HAADAARRPGATDGAPDDEDD) is disordered. Calx-beta domains lie at 389-482 (EDDG…FVRL) and 512-611 (ATVT…FIEL). Glu407, Asp443, Asp468, Asp469, Ile471, Glu473, Glu476, Asp518, Asp519, Asp520, Glu536, Asp598, Glu599, and Glu600 together coordinate Ca(2+). Residue Ser622 is modified to Phosphoserine. Residue Glu665 participates in Ca(2+) binding. Transmembrane regions (helical) follow at residues 721 to 741 (CFDYVMHFLTVFWKVLFACVP), 749 to 769 (WACFGVCILVIGVLTALIGDL), 786 to 806 (VVFVALGTSIPDTFASKVAAL), 823 to 843 (AVNVFLGLGVAWSVAAVYWAV), 855 to 875 (LAFSVTLFTVFAFVCIAVLLY), and 893 to 913 (LATTALFLGLWFLYILFSSLE).

The protein belongs to the Ca(2+):cation antiporter (CaCA) (TC 2.A.19) family. SLC8 subfamily. As to expression, detected in kidney cortex, in distal convoluted tubules and connecting segments. Detected in brain and spinal cord (at protein level). Detected in brain, especially in hippocampus CA1, CA2 and CA3 fiels, dentate gyrus, cerebellum and brain cortex.

It is found in the cell membrane. The protein resides in the basolateral cell membrane. It catalyses the reaction Ca(2+)(in) + 3 Na(+)(out) = Ca(2+)(out) + 3 Na(+)(in). Its activity is regulated as follows. Calcium transport is down-regulated by Na(+) and stimulated by Ca(2+). Functionally, mediates the electrogenic exchange of Ca(2+) against Na(+) ions across the cell membrane, and thereby contributes to the regulation of cytoplasmic Ca(2+) levels and Ca(2+)-dependent cellular processes. Contributes to cellular Ca(2+) homeostasis in excitable cells. Contributes to the rapid decrease of cytoplasmic Ca(2+) levels back to baseline after neuronal activation, and thereby contributes to modulate synaptic plasticity, learning and memory. Plays a role in regulating urinary Ca(2+) and Na(+) excretion. This is Sodium/calcium exchanger 2 from Mus musculus (Mouse).